The chain runs to 776 residues: Lysyl oxidase homolog 2 (776 aa).

The signal sequence occupies residues 1–25 (MELHFGSCLSGCLALLVLLPSLSLA). 4 consecutive SRCR domains span residues 61–162 (VRLA…VVCS), 191–305 (IRPI…VSCV), 329–428 (VRLR…VRCN), and 438–546 (VRLN…VACS). 9 disulfides stabilise this stretch: Cys87–Cys151, Cys100–Cys161, Cys131–Cys141, Cys221–Cys294, Cys234–Cys304, Cys268–Cys278, Cys354–Cys417, Cys367–Cys427, and Cys398–Cys408. N-linked (GlcNAc...) asparagine glycosylation occurs at Asn267. Residue Asn291 is glycosylated (N-linked (GlcNAc...) asparagine). N-linked (GlcNAc...) asparagine glycosylation occurs at Asn458. Intrachain disulfides connect Cys467–Cys532, Cys480–Cys545, and Cys514–Cys524. Residues 550–753 (PDLVLNAEIV…WMYNCHVGGA (204 aa)) are lysyl-oxidase like. Asp551 and Leu552 together coordinate Ca(2+). 4 disulfides stabilise this stretch: Cys575-Cys627, Cys581-Cys697, Cys659-Cys675, and Cys665-Cys687. Residues His628, His630, and His632 each coordinate Cu cation. N-linked (GlcNAc...) asparagine glycosylation is present at Asn646. Positions 655-691 (KASFCLEDTECEGDIQKSYECANFGEQGITMGCWDMY) form a cross-link, lysine tyrosylquinone (Lys-Tyr). The residue at position 691 (Tyr691) is a 2',4',5'-topaquinone. Ca(2+) is bound by residues Glu724, Asp726, Asn729, and Asn730. A disulfide bridge links Cys734 with Cys748.

Belongs to the lysyl oxidase family. In terms of assembly, component of some chromatin repressor complex. Interacts with SNAI1. Interacts with TAF10. Interacts with HSPA5. Interacts with EFEMP2. It depends on Cu cation as a cofactor. Requires lysine tyrosylquinone residue as cofactor. Post-translationally, the lysine tyrosylquinone cross-link (LTQ) is generated by condensation of the epsilon-amino group of a lysine with a topaquinone produced by oxidation of tyrosine. N-glycosylated. N-glycosylation on Asn-458 and Asn-646 may be essential for proper folding and secretion; may be composed of a fucosylated carbohydrates attached to a trimannose N-linked glycan core. As to expression, ubiquitous. Highest expression in skin, lung and thymus. Present in chondrocytes: mainly expressed by chondrocytes in healing fractures and in epiphyseal growth plates (at protein level).

The protein resides in the secreted. The protein localises to the extracellular space. It is found in the extracellular matrix. Its subcellular location is the basement membrane. It localises to the nucleus. The protein resides in the chromosome. The protein localises to the endoplasmic reticulum. It catalyses the reaction L-lysyl-[protein] + O2 + H2O = (S)-2-amino-6-oxohexanoyl-[protein] + H2O2 + NH4(+). Its activity is regulated as follows. Specifically inhibited by a mouse monoclonal antibody AB0023, inhibition occurs in a non-competitive manner. In terms of biological role, mediates the post-translational oxidative deamination of lysine residues on target proteins leading to the formation of deaminated lysine (allysine). Acts as a transcription corepressor and specifically mediates deamination of trimethylated 'Lys-4' of histone H3 (H3K4me3), a specific tag for epigenetic transcriptional activation. Shows no activity against histone H3 when it is trimethylated on 'Lys-9' (H3K9me3) or 'Lys-27' (H3K27me3) or when 'Lys-4' is monomethylated (H3K4me1) or dimethylated (H3K4me2). Also mediates deamination of methylated TAF10, a member of the transcription factor IID (TFIID) complex, which induces release of TAF10 from promoters, leading to inhibition of TFIID-dependent transcription. LOXL2-mediated deamination of TAF10 results in transcriptional repression of genes required for embryonic stem cell pluripotency including POU5F1/OCT4, NANOG, KLF4 and SOX2. Involved in epithelial to mesenchymal transition (EMT) via interaction with SNAI1 and participates in repression of E-cadherin, probably by mediating deamination of histone H3. During EMT, involved with SNAI1 in negatively regulating pericentromeric heterochromatin transcription. SNAI1 recruits LOXL2 to pericentromeric regions to oxidize histone H3 and repress transcription which leads to release of heterochromatin component CBX5/HP1A, enabling chromatin reorganization and acquisition of mesenchymal traits. Interacts with the endoplasmic reticulum protein HSPA5 which activates the IRE1-XBP1 pathway of the unfolded protein response, leading to expression of several transcription factors involved in EMT and subsequent EMT induction. When secreted into the extracellular matrix, promotes cross-linking of extracellular matrix proteins by mediating oxidative deamination of peptidyl lysine residues in precursors to fibrous collagen and elastin. Acts as a regulator of sprouting angiogenesis, probably via collagen IV scaffolding. Acts as a regulator of chondrocyte differentiation, probably by regulating expression of factors that control chondrocyte differentiation. This is Lysyl oxidase homolog 2 (Loxl2) from Mus musculus (Mouse).